The primary structure comprises 111 residues: Iron-sulfur cluster assembly protein CyaY (111 aa).

It belongs to the frataxin family.

In terms of biological role, involved in iron-sulfur (Fe-S) cluster assembly. May act as a regulator of Fe-S biogenesis. The protein is Iron-sulfur cluster assembly protein CyaY of Cupriavidus taiwanensis (strain DSM 17343 / BCRC 17206 / CCUG 44338 / CIP 107171 / LMG 19424 / R1) (Ralstonia taiwanensis (strain LMG 19424)).